The sequence spans 118 residues: Large ribosomal subunit protein uL18 (118 aa).

Belongs to the universal ribosomal protein uL18 family. As to quaternary structure, part of the 50S ribosomal subunit; part of the 5S rRNA/L5/L18/L25 subcomplex. Contacts the 5S and 23S rRNAs.

This is one of the proteins that bind and probably mediate the attachment of the 5S RNA into the large ribosomal subunit, where it forms part of the central protuberance. In Ralstonia pickettii (strain 12J), this protein is Large ribosomal subunit protein uL18.